A 373-amino-acid polypeptide reads, in one-letter code: Dual-specificity RNA methyltransferase RlmN (373 aa).

Residue Glu94 is the Proton acceptor of the active site. The Radical SAM core domain occupies 100-339 (EDDRATLCVS…VIVRKTRGDD (240 aa)). Cys107 and Cys344 form a disulfide bridge. 3 residues coordinate [4Fe-4S] cluster: Cys114, Cys118, and Cys121. S-adenosyl-L-methionine is bound by residues 168 to 169 (GE), Ser200, 222 to 224 (SIH), and Asn301. Cys344 acts as the S-methylcysteine intermediate in catalysis.

This sequence belongs to the radical SAM superfamily. RlmN family. It depends on [4Fe-4S] cluster as a cofactor.

The protein resides in the cytoplasm. The catalysed reaction is adenosine(2503) in 23S rRNA + 2 reduced [2Fe-2S]-[ferredoxin] + 2 S-adenosyl-L-methionine = 2-methyladenosine(2503) in 23S rRNA + 5'-deoxyadenosine + L-methionine + 2 oxidized [2Fe-2S]-[ferredoxin] + S-adenosyl-L-homocysteine. The enzyme catalyses adenosine(37) in tRNA + 2 reduced [2Fe-2S]-[ferredoxin] + 2 S-adenosyl-L-methionine = 2-methyladenosine(37) in tRNA + 5'-deoxyadenosine + L-methionine + 2 oxidized [2Fe-2S]-[ferredoxin] + S-adenosyl-L-homocysteine. Its function is as follows. Specifically methylates position 2 of adenine 2503 in 23S rRNA and position 2 of adenine 37 in tRNAs. m2A2503 modification seems to play a crucial role in the proofreading step occurring at the peptidyl transferase center and thus would serve to optimize ribosomal fidelity. The polypeptide is Dual-specificity RNA methyltransferase RlmN (Shewanella baltica (strain OS223)).